A 504-amino-acid chain; its full sequence is WD repeat-containing protein 55 homolog (504 aa).

Disordered regions lie at residues 1 to 21 (MDRH…DIDD) and 33 to 132 (QEVL…DDDD). Composition is skewed to acidic residues over residues 12–21 (NEDELDDIDD) and 33–48 (QEVL…EYDL). Positions 63–74 (SSSNESISSDGS) are enriched in low complexity. Residues 78–89 (NAEDSDSDDSMI) are compositionally biased toward acidic residues. WD repeat units follow at residues 156 to 195 (KLED…NKLL), 200 to 239 (VHAK…LKKL), 243 to 281 (AHDD…AIFE), 284 to 323 (EVED…LYVQ), 326 to 365 (PYEE…YHCD), and 410 to 449 (QHNM…DFGD). The tract at residues 477 to 504 (FFADMTKDQDDDDNDGGNDTAAGPSNVT) is disordered.

Belongs to the WD repeat WDR55 family.

This is WD repeat-containing protein 55 homolog from Drosophila virilis (Fruit fly).